The following is a 241-amino-acid chain: Phycocyanobilin:ferredoxin oxidoreductase (241 aa).

The protein belongs to the HY2 family.

It catalyses the reaction (2R,3Z)-phycocyanobilin + 4 oxidized [2Fe-2S]-[ferredoxin] = biliverdin IXalpha + 4 reduced [2Fe-2S]-[ferredoxin] + 4 H(+). Its function is as follows. Catalyzes the four-electron reduction of biliverdin IX-alpha (2-electron reduction at both the A and D rings); the reaction proceeds via an isolatable 2-electron intermediate, 181,182-dihydrobiliverdin. The polypeptide is Phycocyanobilin:ferredoxin oxidoreductase (Prochlorococcus marinus (strain MIT 9301)).